The following is a 148-amino-acid chain: tRNA-specific adenosine deaminase (148 aa).

Positions 1–116 constitute a CMP/dCMP-type deaminase domain; the sequence is MEQALKQARL…SNLRYFNSSA (116 aa). His48 is a binding site for Zn(2+). Catalysis depends on Glu50, which acts as the Proton donor. Residues Cys78 and Cys81 each contribute to the Zn(2+) site.

It belongs to the cytidine and deoxycytidylate deaminase family. Homodimer. Zn(2+) serves as cofactor.

The enzyme catalyses adenosine(34) in tRNA + H2O + H(+) = inosine(34) in tRNA + NH4(+). Its function is as follows. Catalyzes the deamination of adenosine to inosine at the wobble position 34 of tRNA(Arg2). The polypeptide is tRNA-specific adenosine deaminase (Rickettsia typhi (strain ATCC VR-144 / Wilmington)).